Reading from the N-terminus, the 90-residue chain is uncharacterized protein (90 aa).

The chain crosses the membrane as a helical span at residues 12–32 (VVGGLSFWSFSAGVIMIVNAF).

It localises to the membrane. This is an uncharacterized protein from Mycoplasma pneumoniae (strain ATCC 29342 / M129 / Subtype 1) (Mycoplasmoides pneumoniae).